The sequence spans 444 residues: MARKPGQDFRSAQSGLSELKSRLFFVIGALLVFRAGSFVPIPGIDAAVLAELFEQQKGTIVEMFNMFSGGALERASILALGIMPYISASIVVQLLTVVHPALAELKKEGEAGRRKISQYTRYGTLVLATFQAIGIATGLPNMVNNLVVIDQTMFTLIATVSLVTGTMFLMWLGEQITERGIGNGISILIFAGIVAGLPKAIGQTIEQARQGELHVLLLLLIAVLAFAVIYFVVFMERGQRRIVVNYAKRQQGRKVFAAQSTHLPLKINMAGVIPAIFASSIILFPGTLAQWFGQNGESSTFGWLTDVSLALSPGQPLYVMLYAAAIIFFCFFYTALVFNPRETADNLKKSGAFVPGIRPGEQTAKYIDKVMTRLTLAGALYITFICLIPEFMMVAWNVRFYFGGTSLLIVVVVIMDFMAQVQTHLMSHQYESVLKKANLKGYGR.

Transmembrane regions (helical) follow at residues 24-44 (FFVI…IPGI), 77-97 (ILAL…LLTV), 123-143 (GTLV…PNMV), 153-173 (MFTL…MWLG), 181-201 (IGNG…PKAI), 215-235 (VLLL…VVFM), 269-289 (MAGV…GTLA), 318-338 (YVML…ALVF), 376-396 (LAGA…MVAW), and 400-420 (FYFG…FMAQ).

This sequence belongs to the SecY/SEC61-alpha family. In terms of assembly, component of the Sec protein translocase complex. Heterotrimer consisting of SecY, SecE and SecG subunits. The heterotrimers can form oligomers, although 1 heterotrimer is thought to be able to translocate proteins. Interacts with the ribosome. Interacts with SecDF, and other proteins may be involved. Interacts with SecA.

The protein localises to the cell inner membrane. Functionally, the central subunit of the protein translocation channel SecYEG. Consists of two halves formed by TMs 1-5 and 6-10. These two domains form a lateral gate at the front which open onto the bilayer between TMs 2 and 7, and are clamped together by SecE at the back. The channel is closed by both a pore ring composed of hydrophobic SecY resides and a short helix (helix 2A) on the extracellular side of the membrane which forms a plug. The plug probably moves laterally to allow the channel to open. The ring and the pore may move independently. In Vibrio cholerae serotype O1 (strain ATCC 39315 / El Tor Inaba N16961), this protein is Protein translocase subunit SecY.